The chain runs to 283 residues: Pantothenate synthetase (283 aa).

Residue Met34–His41 participates in ATP binding. Catalysis depends on His41, which acts as the Proton donor. Gln65 contributes to the (R)-pantoate binding site. Beta-alanine is bound at residue Gln65. Gly152–Asp155 is an ATP binding site. Residue Gln158 participates in (R)-pantoate binding. Residue Met189–Arg192 coordinates ATP.

This sequence belongs to the pantothenate synthetase family. In terms of assembly, homodimer.

The protein resides in the cytoplasm. The catalysed reaction is (R)-pantoate + beta-alanine + ATP = (R)-pantothenate + AMP + diphosphate + H(+). It participates in cofactor biosynthesis; (R)-pantothenate biosynthesis; (R)-pantothenate from (R)-pantoate and beta-alanine: step 1/1. Functionally, catalyzes the condensation of pantoate with beta-alanine in an ATP-dependent reaction via a pantoyl-adenylate intermediate. The polypeptide is Pantothenate synthetase (Rhodopseudomonas palustris (strain BisA53)).